Here is a 189-residue protein sequence, read N- to C-terminus: Small ribosomal subunit protein uS5 (189 aa).

Residues 27-90 (FEERLLEAAR…EDAKKKTIRV (64 aa)) enclose the S5 DRBM domain.

This sequence belongs to the universal ribosomal protein uS5 family. Part of the 30S ribosomal subunit. Contacts proteins S4 and S8.

With S4 and S12 plays an important role in translational accuracy. Its function is as follows. Located at the back of the 30S subunit body where it stabilizes the conformation of the head with respect to the body. This chain is Small ribosomal subunit protein uS5, found in Hydrogenobaculum sp. (strain Y04AAS1).